Reading from the N-terminus, the 354-residue chain is Protein-glutamate methylesterase/protein-glutamine glutaminase 2 (354 aa).

One can recognise a Response regulatory domain in the interval 5-122 (RVLIVDDSAL…SLKIKEVAEE (118 aa)). Residue Asp56 is modified to 4-aspartylphosphate. Positions 159–354 (PDTSFKKLIL…IADRIVELVR (196 aa)) constitute a CheB-type methylesterase domain. Active-site residues include Ser172, His199, and Asp298.

The protein belongs to the CheB family. Post-translationally, phosphorylated by CheA. Phosphorylation of the N-terminal regulatory domain activates the methylesterase activity.

It is found in the cytoplasm. It carries out the reaction [protein]-L-glutamate 5-O-methyl ester + H2O = L-glutamyl-[protein] + methanol + H(+). The catalysed reaction is L-glutaminyl-[protein] + H2O = L-glutamyl-[protein] + NH4(+). In terms of biological role, involved in chemotaxis. Part of a chemotaxis signal transduction system that modulates chemotaxis in response to various stimuli. Catalyzes the demethylation of specific methylglutamate residues introduced into the chemoreceptors (methyl-accepting chemotaxis proteins or MCP) by CheR. Also mediates the irreversible deamidation of specific glutamine residues to glutamic acid. This is Protein-glutamate methylesterase/protein-glutamine glutaminase 2 from Carboxydothermus hydrogenoformans (strain ATCC BAA-161 / DSM 6008 / Z-2901).